Reading from the N-terminus, the 698-residue chain is Elongation factor G (698 aa).

In terms of domain architecture, tr-type G spans 10–285 (AATRNIGIMA…AVVDFLPSPT (276 aa)). Residues 19–26 (AHIDAGKT), 83–87 (DTPGH), and 137–140 (NKMD) contribute to the GTP site.

Belongs to the TRAFAC class translation factor GTPase superfamily. Classic translation factor GTPase family. EF-G/EF-2 subfamily.

Its subcellular location is the cytoplasm. Its function is as follows. Catalyzes the GTP-dependent ribosomal translocation step during translation elongation. During this step, the ribosome changes from the pre-translocational (PRE) to the post-translocational (POST) state as the newly formed A-site-bound peptidyl-tRNA and P-site-bound deacylated tRNA move to the P and E sites, respectively. Catalyzes the coordinated movement of the two tRNA molecules, the mRNA and conformational changes in the ribosome. The protein is Elongation factor G of Parafrankia sp. (strain EAN1pec).